Reading from the N-terminus, the 177-residue chain is Adenine phosphoribosyltransferase (177 aa).

Belongs to the purine/pyrimidine phosphoribosyltransferase family. Homodimer.

The protein resides in the cytoplasm. The catalysed reaction is AMP + diphosphate = 5-phospho-alpha-D-ribose 1-diphosphate + adenine. It participates in purine metabolism; AMP biosynthesis via salvage pathway; AMP from adenine: step 1/1. Functionally, catalyzes a salvage reaction resulting in the formation of AMP, that is energically less costly than de novo synthesis. This is Adenine phosphoribosyltransferase from Prosthecochloris aestuarii (strain DSM 271 / SK 413).